The primary structure comprises 560 residues: Clathrin interactor EPSIN 1 (560 aa).

Positions 20–152 constitute an ENTH domain; sequence LKVLKVPEME…NNKEKISEIR (133 aa). Residues 190 to 288 form a disordered region; sequence NFDSYKDRDS…KPSTGSANQV (99 aa). Residues 193–220 show a composition bias toward basic and acidic residues; sequence SYKDRDSREDKNDYESFQKSRRGVKTEE. The span at 221 to 233 shows a compositional bias: polar residues; that stretch reads QSYTSKKSFSRYG. Over residues 234–251 the composition is skewed to basic and acidic residues; it reads STDHDNLSSGKKSPDSAK. The segment covering 274-287 has biased composition (polar residues); that stretch reads GTSSNKPSTGSANQ. Positions 296–300 match the Clathrin binding motif; the sequence is IGDFL. An ALPHA-ADR binding motif is present at residues 320–322; the sequence is DLF. The span at 414-439 shows a compositional bias: polar residues; it reads SHSASVSTGPQAPSVHGSATNTTSPL. Disordered regions lie at residues 414 to 453 and 517 to 560; these read SHSA…QKKD and LGKT…GFKQ. Residues 526-536 are compositionally biased toward low complexity; it reads QQQQQQQQQQQ. A compositionally biased stretch (polar residues) spans 544–554; sequence FFSSLSNQRYQ.

The protein belongs to the epsin family. In terms of assembly, interacts with clathrin, VTI11, GAMMA-ADR and VSR1. Binds to the deubiquitinating enzyme AMSH3. Mostly expressed in cotyledons and flowers, and, to a lower extent, in roots, leaves and siliques (at protein level).

Its subcellular location is the golgi apparatus. It is found in the prevacuolar compartment. The protein resides in the cytoplasm. It localises to the cytoplasmic vesicle. The protein localises to the clathrin-coated vesicle. Its subcellular location is the cytoskeleton. In terms of biological role, may have a role in transport via clathrin-coated vesicles from the trans-Golgi network to endosomes. Stimulates clathrin assembly. Does not seem to bind to phospholipids. Plays an important role in the vacuolar trafficking of soluble cargo proteins at the trans-Golgi network. The protein is Clathrin interactor EPSIN 1 (EPSIN1) of Arabidopsis thaliana (Mouse-ear cress).